The following is a 139-amino-acid chain: Transmembrane protein 250 (139 aa).

2 helical membrane passes run 56 to 76 (FLLY…LAAL) and 116 to 136 (VYGI…FMVF).

In terms of assembly, (Microbial infection) Interacts with herpes simplex virus 1/HHV-1 protein CVC2/UL25.

It is found in the membrane. Its subcellular location is the nucleus. It localises to the cytoplasm. Its function is as follows. May play a role in cell proliferation by promoting progression into S phase. In terms of biological role, (Microbial infection) Promotes human herpes simplex virus 1/HHV-1 proliferation. The chain is Transmembrane protein 250 from Homo sapiens (Human).